Reading from the N-terminus, the 298-residue chain is ATP phosphoribosyltransferase (298 aa).

This sequence belongs to the ATP phosphoribosyltransferase family. Long subfamily. Requires Mg(2+) as cofactor.

It localises to the cytoplasm. The catalysed reaction is 1-(5-phospho-beta-D-ribosyl)-ATP + diphosphate = 5-phospho-alpha-D-ribose 1-diphosphate + ATP. Its pathway is amino-acid biosynthesis; L-histidine biosynthesis; L-histidine from 5-phospho-alpha-D-ribose 1-diphosphate: step 1/9. Its activity is regulated as follows. Feedback inhibited by histidine. In terms of biological role, catalyzes the condensation of ATP and 5-phosphoribose 1-diphosphate to form N'-(5'-phosphoribosyl)-ATP (PR-ATP). Has a crucial role in the pathway because the rate of histidine biosynthesis seems to be controlled primarily by regulation of HisG enzymatic activity. The protein is ATP phosphoribosyltransferase of Vibrio vulnificus (strain CMCP6).